The chain runs to 1069 residues: RE1-silencing transcription factor (1069 aa).

Residues 32-121 (DLHDLSKAEL…SLELSVVEPQ (90 aa)) are interaction with SIN3A. The tract at residues 43-57 (APQLIMLANVALTGE) is interaction with SIN3B. Positions 85–104 (SDSEGEGLEESAELKGDPSG) are disordered. Positions 144–417 (PVAEDKCKNL…KSKHPTCPSK (274 aa)) are interaction with ZFP90. The C2H2-type 1 zinc-finger motif lies at 158–180 (FRCKPCQYEAESEEQFVHHIRVH). The required for binding to the neuron-restrictive silencer element stretch occupies residues 200–211 (SGASPSEEGEFS). C2H2-type zinc fingers lie at residues 215-237 (IRCD…LKHH), 247-269 (YKCI…LRNH), 275-297 (YTCS…VRTH), 303-325 (YKCE…MRTH), 331-354 (FKCD…RQVH), 360-382 (LNCP…VELH), and 388-411 (FNCP…KSKH). Disordered regions lie at residues 425 to 737 (KLKK…MELP) and 830 to 1022 (KASK…GKEG). A compositionally biased stretch (basic and acidic residues) spans 451–482 (EQAKTKGVDASARRSERPVKGVGKDVPKEKKP). Residues 484-493 (SNASVVQVTT) show a composition bias toward polar residues. 2 stretches are compositionally biased toward basic and acidic residues: residues 498–511 (SAVE…KHTD) and 554–576 (ESKP…KADK). Basic residues predominate over residues 584-600 (KGGKKTALKTKTAKKGS). The span at 630–643 (AVVTPSGSTQTELS) shows a compositional bias: polar residues. Pro residues-rich tracts occupy residues 679–706 (PSPP…PCPM) and 713–734 (PSPP…PLPM). 2 stretches are compositionally biased toward basic and acidic residues: residues 851-860 (RREETPKDQE) and 876-886 (GGTEEAGESRA). The span at 894 to 904 (STSALSSEQSS) shows a compositional bias: low complexity. Positions 930–943 (TEQKTDRVPLKDSA) are enriched in basic and acidic residues. S948 is modified (phosphoserine). Residues 957–968 (EAAAPAVVASPP) show a composition bias toward low complexity. Positions 981 to 1059 (EGIHSHDGSD…HLNRHLVNVY (79 aa)) are interaction with RCOR1. The C2H2-type 9 zinc finger occupies 1032–1054 (FVCIFCDRSFRKEKDYSKHLNRH).

Isoform 1 and isoform 6 form heterodimers. Isoform 6: Forms homodimers and homooligomers; binds to the neuron-restrictive silencer element (NRSE) as monomer. Interacts with SIN3A, SIN3B and RCOR1. Interacts with CDYL. Interacts with EHMT1 and EHMT2 only in the presence of CDYL. Part of a complex containing at least CDYL, REST, WIZ, SETB1, EHMT1 and EHMT2. Interacts (via zinc-finger DNA-binding domain) with ZFP90 (via N- and C-termini); the interaction inhibits REST repressor activity. Interacts (via C2H2-type zinc finger 5) with PRICKLE1. Interacts with FBXW11 and BTRC. Interacts with USP7. Post-translationally, O-glycosylated. In terms of processing, phosphorylated; phosphorylation is required for ubiquitination. Ubiquitinated; ubiquitination is mediated by BTRC and leads to proteasomal degradation in G2 phase. Ubiquitination increases during neuronal differentiation. Deubiquitinated by USP7; leading to its stabilization and promoting the maintenance of neural progenitor cells. Expressed in the hippocampus including the granule cell layer of the dentate gyrus, the pyramidal cell layers of CA1 and CA3, the apical and basilar dendrite layers of the stratum radiatum and stratum oriens of CA1, the stratum lucidum and stratum oriens of CA3 and in astroglia (at protein level). Expressed in the brain, with the highest levels in the neurons of hippocampus, pons/medulla and midbrain.

The protein localises to the nucleus. Its subcellular location is the cytoplasm. In terms of biological role, transcriptional repressor which binds neuron-restrictive silencer element (NRSE) and represses neuronal gene transcription in non-neuronal cells. Restricts the expression of neuronal genes by associating with two distinct corepressors, SIN3A and RCOR1, which in turn recruit histone deacetylase to the promoters of REST-regulated genes. Mediates repression by recruiting the BHC complex at RE1/NRSE sites which acts by deacetylating and demethylating specific sites on histones, thereby acting as a chromatin modifier. Transcriptional repression by REST-CDYL via the recruitment of histone methyltransferase EHMT2 may be important in transformation suppression. Represses the expression of SRRM4 in non-neural cells to prevent the activation of neural-specific splicing events and to prevent production of REST isoform 6. Repressor activity may be inhibited by forming heterodimers with isoform 6, thereby preventing binding to NRSE or binding to corepressors and leading to derepression of target genes. Also maintains repression of neuronal genes in neural stem cells, and allows transcription and differentiation into neurons by dissociation from RE1/NRSE sites of target genes. Thereby is involved in maintaining the quiescent state of adult hippocampal neural stem cells and preventing premature differentiation into mature neurons. Plays a role in the developmental switch in synaptic NMDA receptor composition during postnatal development, by repressing GRIN2B expression and thereby altering NMDA receptor properties from containing primarily GRIN2B to primarily GRIN2A subunits. Acts as a regulator of osteoblast differentiation. Key repressor of gene expression in hypoxia; represses genes in hypoxia by direct binding to an RE1/NRSE site on their promoter regions. May also function in stress resistance in the brain during aging; possibly by regulating expression of genes involved in cell death and in the stress response. Repressor of gene expression in the hippocampus after ischemia by directly binding to RE1/NRSE sites and recruiting SIN3A and RCOR1 to promoters of target genes, thereby promoting changes in chromatin modifications and ischemia-induced cell death. After ischemia, might play a role in repression of miR-132 expression in hippocampal neurons, thereby leading to neuronal cell death. Functionally, binds to the 3' region of the neuron-restrictive silencer element (NRSE), with lower affinity than full-length REST isoform 1. Exhibits weaker repressor activity compared to isoform 1. May negatively regulate the repressor activity of isoform 1 by binding to isoform 1, thereby preventing its binding to NRSE and leading to derepression of target genes. However, in another study, does not appear to be implicated in repressor activity of a NRSE motif-containing reporter construct nor in inhibitory activity on the isoform 1 transcriptional repressor activity. Post-transcriptional inactivation of REST by SRRM4-dependent alternative splicing into isoform 6 is required in mechanosensory hair cells in the inner ear for derepression of neuronal genes and hearing. The protein is RE1-silencing transcription factor (Rest) of Rattus norvegicus (Rat).